We begin with the raw amino-acid sequence, 398 residues long: tRNA-specific 2-thiouridylase MnmA (398 aa).

ATP is bound by residues 18–25 and leucine 44; that span reads AMSGGVDS. Cysteine 112 serves as the catalytic Nucleophile. The cysteines at positions 112 and 213 are disulfide-linked. An ATP-binding site is contributed by glycine 136. The tract at residues 163–165 is interaction with tRNA; it reads RDQ. Cysteine 213 (cysteine persulfide intermediate) is an active-site residue.

It belongs to the MnmA/TRMU family.

The protein localises to the cytoplasm. It carries out the reaction S-sulfanyl-L-cysteinyl-[protein] + uridine(34) in tRNA + AH2 + ATP = 2-thiouridine(34) in tRNA + L-cysteinyl-[protein] + A + AMP + diphosphate + H(+). Catalyzes the 2-thiolation of uridine at the wobble position (U34) of tRNA, leading to the formation of s(2)U34. The chain is tRNA-specific 2-thiouridylase MnmA from Sinorhizobium medicae (strain WSM419) (Ensifer medicae).